A 162-amino-acid polypeptide reads, in one-letter code: Protein LTO1 (162 aa).

The segment at 17-53 is deca-GX3 motif; required for interaction with YAE1 and the CIA complex; it reads GFLEGQNENIKQSFLEGKQYGLQVGFQRFTLLGQMEG.

The protein belongs to the LTO1 family. As to quaternary structure, forms a complex with YAE1; the complex bridges the interaction between the CIA complex and RLI1. Associates with the CIA complex (via its C-terminal tryptophan).

Its subcellular location is the nucleus. Functionally, essential for life in oxygen, but nonessential under anaerobic conditions. Required for biogenesis of the large ribosomal subunit and initiation of translation in oxygen. The complex LTO1:YAE1 functions as a target specific adapter that recruits apo-RLI1 to the cytosolic iron-sulfur protein assembly (CIA) complex machinery. In Saccharomyces cerevisiae (strain ATCC 204508 / S288c) (Baker's yeast), this protein is Protein LTO1.